A 524-amino-acid chain; its full sequence is Keratin, type II cytoskeletal 71 (524 aa).

Residues 1 to 130 (MSRQFTCKSG…DPEIQKVRAQ (130 aa)) are head. Positions 131 to 166 (EREQIKALNNKFASFIDKVRFLEQQNQVLQTKWELL) are coil 1A. The IF rod domain occupies 131 to 444 (EREQIKALNN…KLLESEECRM (314 aa)). The interval 167 to 185 (QQLDLNNCKNNLEPILEGH) is linker 1. Residues 186-277 (ISNMRKQLET…CLFEAEMAQI (92 aa)) are coil 1B. The segment at 278–301 (QSHISDMSVILSMDNNRNLDLDSI) is linker 12. Positions 302–440 (IDEVRAQYEE…ATYRKLLESE (139 aa)) are coil 2. The tail stretch occupies residues 441–524 (ECRMSGEYSS…LSTPSKKGGR (84 aa)). The segment at 493–524 (GGENRSRGSASDYKDTLTKGSSLSTPSKKGGR) is disordered. Positions 494 to 509 (GENRSRGSASDYKDTL) are enriched in basic and acidic residues. Positions 510–524 (TKGSSLSTPSKKGGR) are enriched in polar residues.

Belongs to the intermediate filament family. In terms of assembly, heterodimer of a type I and a type II keratin. Associates with KRT16 and/or KRT17. In terms of tissue distribution, specifically expressed in the inner root sheath (IRS) of the hair follicle. Present in Henle and the Huxley layers of the IRS, while expression in the cuticle is unsure (at protein level).

The protein resides in the cytoplasm. The protein localises to the cytoskeleton. In terms of biological role, plays a central role in hair formation. Essential component of keratin intermediate filaments in the inner root sheath (IRS) of the hair follicle. The polypeptide is Keratin, type II cytoskeletal 71 (Krt71) (Mus musculus (Mouse)).